The sequence spans 287 residues: 4-diphosphocytidyl-2-C-methyl-D-erythritol kinase (287 aa).

Residue Lys12 is part of the active site. 94–104 (PAQAGMGGGSS) serves as a coordination point for ATP. The active site involves Asp136.

This sequence belongs to the GHMP kinase family. IspE subfamily.

It catalyses the reaction 4-CDP-2-C-methyl-D-erythritol + ATP = 4-CDP-2-C-methyl-D-erythritol 2-phosphate + ADP + H(+). The protein operates within isoprenoid biosynthesis; isopentenyl diphosphate biosynthesis via DXP pathway; isopentenyl diphosphate from 1-deoxy-D-xylulose 5-phosphate: step 3/6. In terms of biological role, catalyzes the phosphorylation of the position 2 hydroxy group of 4-diphosphocytidyl-2C-methyl-D-erythritol. The polypeptide is 4-diphosphocytidyl-2-C-methyl-D-erythritol kinase (Albidiferax ferrireducens (strain ATCC BAA-621 / DSM 15236 / T118) (Rhodoferax ferrireducens)).